The sequence spans 1345 residues: Membrane-anchored lipid-binding protein LAM4 (1345 aa).

Residues 1 to 1197 are Cytoplasmic-facing; it reads MTRDSKKKHH…NFSSEIFMNK (1197 aa). Disordered stretches follow at residues 51–80, 115–134, 139–164, 190–302, 356–397, 425–447, and 489–531; these read RVGG…KAAA, SLKG…PSLS, EKEK…DGHD, DADN…SLDD, LPEA…KPRR, SFNS…PREM, and STII…NGRQ. Threonine 66 carries the post-translational modification Phosphothreonine. Residues 216–228 show a composition bias toward low complexity; that stretch reads SENSTNNKNTSST. Residues 246-271 are compositionally biased toward polar residues; sequence SKSSTPSNQQLNTTEAGSKSKPSSLS. A compositionally biased stretch (low complexity) spans 283–294; sequence HSNSHSSSNAIS. Residues 425-436 are compositionally biased toward polar residues; it reads SFNSSNGLTNND. A compositionally biased stretch (low complexity) spans 498-516; the sequence is SNGRPSSGLRRSSSKSFSS. Residues 549–616 enclose the GRAM domain; the sequence is EFHAIFKDSG…FKTIVQIEKR (68 aa). Positions 665 to 677 are enriched in low complexity; that stretch reads SNSNNTNSSSNSI. Residues 665–722 are disordered; the sequence is SNSNNTNSSSNSISDDENDDYDDDYDDYGDDDDDLYDNSNNISDSTDMTSSVSIGKPE. Residues 678–700 are compositionally biased toward acidic residues; that stretch reads SDDENDDYDDDYDDYGDDDDDLY. Position 747 is a phosphoserine (serine 747). VASt domains follow at residues 758–930 and 967–1139; these read NEKL…TRSA and DDSI…SRAK. The disordered stretch occupies residues 930 to 963; that stretch reads ATKRKRSSKENTVTVSTLPKMEPSSHAPTEPDIQ. The segment covering 1141 to 1158 has biased composition (basic residues); the sequence is KKPVKKVMKSHDKHRPFH. Residues 1141 to 1172 form a disordered region; sequence KKPVKKVMKSHDKHRPFHSKVEQKSSESRKSD. Residues 1159-1172 show a composition bias toward basic and acidic residues; that stretch reads SKVEQKSSESRKSD. Residues 1198 to 1218 traverse the membrane as a helical segment; it reads LLSPQKLFLILGLTIMLFWSP. At 1219-1345 the chain is on the lumenal side; it reads RLHVFQEKNN…NIERDANDLS (127 aa).

It belongs to the YSP2 family.

It is found in the endoplasmic reticulum membrane. Its function is as follows. May be involved in sterol transfer between intracellular membranes. The protein is Membrane-anchored lipid-binding protein LAM4 of Saccharomyces cerevisiae (strain ATCC 204508 / S288c) (Baker's yeast).